The primary structure comprises 260 residues: Cobalt transport protein CbiM (260 aa).

The signal sequence occupies residues 1–34; the sequence is MKLGESMKKNATLSVKIIAFLGVLIFTVMPVANA. 6 consecutive transmembrane segments (helical) span residues 39–59, 77–97, 109–129, 132–152, 175–195, and 215–235; these read EGYLSPKWCIIWGILVLPFLI, LLFAMAGAFIFILSALKLPSF, LSTILFGPAITTVLGVIVLLF, LLLAHGGISTLGANSFAMAVM, IFFSATVGDLFTYCITAIQLG, and VFAITQIPIAIAEGILTVLIF.

Belongs to the CbiM family. In terms of assembly, forms an energy-coupling factor (ECF) transporter complex composed of an ATP-binding protein (A component, CbiO), a transmembrane protein (T component, CbiQ) and 2 possible substrate-capture proteins (S components, CbiM and CbiN) of unknown stoichimetry.

It is found in the cell membrane. It participates in cofactor biosynthesis; adenosylcobalamin biosynthesis. Functionally, part of the energy-coupling factor (ECF) transporter complex CbiMNOQ involved in cobalt import. The protein is Cobalt transport protein CbiM of Clostridium cellulovorans (strain ATCC 35296 / DSM 3052 / OCM 3 / 743B).